An 83-amino-acid chain; its full sequence is Hainantoxin-III 9 (83 aa).

The signal sequence occupies residues 1–21 (MKASMFLALAGLALLFVVCYA). A propeptide spanning residues 22-48 (SESEEKEFPIELLSKIFAVDVFKGEER) is cleaved from the precursor. Intrachain disulfides connect C50–C65, C57–C70, and C64–C77. L81 is subject to Leucine amide.

Belongs to the neurotoxin 10 (Hwtx-1) family. 15 (Hntx-3) subfamily. Monomer. Expressed by the venom gland.

The protein localises to the secreted. Selective antagonist of neuronal tetrodotoxin (TTX)-sensitive voltage-gated sodium channels (IC(50)=1270 nM on Nav1.1/SCN1A, 270 nM on Nav1.2/SCN2A, 491 nM on Nav1.3/SCN3A and 232 nM on Nav1.7/SCN9A). This toxin suppress Nav1.7 current amplitude without significantly altering the activation, inactivation, and repriming kinetics. Short extreme depolarizations partially activate the toxin-bound channel, indicating voltage-dependent inhibition of this toxin. This toxin increases the deactivation of the Nav1.7 current after extreme depolarizations. The toxin-Nav1.7 complex is gradually dissociated upon prolonged strong depolarizations in a voltage-dependent manner, and the unbound toxin rebinds to Nav1.7 after a long repolarization. Moreover, analysis of chimeric channels showed that the DIIS3-S4 linker is critical for toxin binding to Nav1.7. These data are consistent with this toxin interacting with Nav1.7 site 4 and trapping the domain II voltage sensor in the closed state. The protein is Hainantoxin-III 9 of Cyriopagopus hainanus (Chinese bird spider).